We begin with the raw amino-acid sequence, 258 residues long: UDP-N-acetylenolpyruvoylglucosamine reductase (258 aa).

The active site involves Arg142. Residue Ser184 is the Proton donor of the active site. Glu254 is a catalytic residue.

Belongs to the MurB family. FAD serves as cofactor.

It localises to the cytoplasm. The catalysed reaction is UDP-N-acetyl-alpha-D-muramate + NADP(+) = UDP-N-acetyl-3-O-(1-carboxyvinyl)-alpha-D-glucosamine + NADPH + H(+). It participates in cell wall biogenesis; peptidoglycan biosynthesis. In terms of biological role, cell wall formation. The sequence is that of UDP-N-acetylenolpyruvoylglucosamine reductase from Campylobacter jejuni (strain RM1221).